We begin with the raw amino-acid sequence, 417 residues long: Phosphoglycerate kinase 1 (417 aa).

Serine 2 is subject to N-acetylserine. Phosphoserine is present on residues serine 2 and serine 4. At lysine 6 the chain carries N6-succinyllysine. N6-acetyllysine is present on lysine 11. Valine 23, aspartate 24, phenylalanine 25, asparagine 26, glutamine 38, and arginine 39 together coordinate (2R)-3-phosphoglycerate. Residues 38-43 (QRIKAA) are mitochondrial targeting region exposed following cis-trans isomerization by PIN1 and recognized by the TOM complex for mitochondrial translocation of the protein. N6-acetyllysine; alternate is present on lysine 48. N6-succinyllysine; alternate is present on lysine 48. Serine 62, histidine 63, glycine 65, and arginine 66 together coordinate (2R)-3-phosphoglycerate. Lysine 75 is modified (N6-acetyllysine). Tyrosine 76 carries the post-translational modification Phosphotyrosine. 2 positions are modified to N6-acetyllysine: lysine 86 and lysine 91. Residue lysine 97 is modified to N6-acetyllysine; alternate. Residue lysine 97 is modified to N6-(2-hydroxyisobutyryl)lysine; alternate. Leucine 122 and arginine 123 together coordinate (2R)-3-phosphoglycerate. Lysine 131 is subject to N6-acetyllysine; alternate. Lysine 131 is modified (N6-malonyllysine; alternate). Lysine 146 carries the post-translational modification N6-acetyllysine. Residues histidine 170 and arginine 171 each coordinate (2R)-3-phosphoglycerate. N6-succinyllysine is present on lysine 191. Phosphotyrosine is present on tyrosine 196. At lysine 199 the chain carries N6-acetyllysine. Position 203 is a phosphoserine (serine 203). Glycine 214 serves as a coordination point for ADP. Residue glycine 214 coordinates CDP. AMP contacts are provided by alanine 215 and lysine 216. Alanine 215 contributes to the ATP binding site. Alanine 215 contacts Mg(2+). The residue at position 216 (lysine 216) is an N6-(2-hydroxyisobutyryl)lysine. Mg(2+)-binding residues include alanine 218 and aspartate 219. Aspartate 219 is a binding site for CDP. Residue lysine 220 coordinates AMP. Lysine 220 contacts ATP. Lysine 220 carries the N6-(2-hydroxyisobutyryl)lysine modification. Glycine 238 is a binding site for ADP. Residue glycine 238 participates in CDP binding. Position 239 (glycine 239) interacts with AMP. ATP is bound at residue glycine 239. N6-acetyllysine is present on residues lysine 267 and lysine 291. Residue glycine 313 coordinates AMP. Glycine 313 is an ATP binding site. Lysine 323 is modified (N6-(2-hydroxyisobutyryl)lysine). CDP contacts are provided by glycine 338, valine 340, and phenylalanine 343. Position 343 (phenylalanine 343) interacts with ADP. Residue glutamate 344 participates in AMP binding. Glutamate 344 lines the ATP pocket. Lysine 361 carries the N6-acetyllysine modification. Residues aspartate 375 and threonine 376 each coordinate ATP. Residue aspartate 375 coordinates Mg(2+).

This sequence belongs to the phosphoglycerate kinase family. Monomer. Interacts with kinase MAPK1/ERK2; the interaction is direct, occurs under hypoxic conditions, and promotes its interaction with PIN1. Interacts with peptidyl-prolyl cis-trans isomerase PIN1; the interaction is direct, occurs under hypoxic conditions, and targets the protein to the mitochondrion by promoting interactions with the TOM complex. Interacts with mitochondrial circRNA mcPGK1 (via its 2nd stem-loop); the interaction is direct and targets the protein to the mitochondrion by promoting interactions with the TOM complex. Interacts with pyruvate dehydrogenase kinase PDK1; the interaction is direct, occurs under hypoxic conditions and leads to PDK1-mediated inhibition of pyruvate dehydrogenase complex activity. Requires Mg(2+) as cofactor. Phosphorylated at Ser-203 by MAPK1/ERK2 under hypoxic conditions, which promotes its mitochondrial targeting.

The protein resides in the cytoplasm. It localises to the cytosol. Its subcellular location is the mitochondrion matrix. The catalysed reaction is (2R)-3-phosphoglycerate + ATP = (2R)-3-phospho-glyceroyl phosphate + ADP. It catalyses the reaction L-seryl-[protein] + ATP = O-phospho-L-seryl-[protein] + ADP + H(+). It participates in carbohydrate degradation; glycolysis; pyruvate from D-glyceraldehyde 3-phosphate: step 2/5. Functionally, catalyzes one of the two ATP producing reactions in the glycolytic pathway via the reversible conversion of 1,3-diphosphoglycerate to 3-phosphoglycerate. Both L- and D- forms of purine and pyrimidine nucleotides can be used as substrates, but the activity is much lower on pyrimidines. In addition to its role as a glycolytic enzyme, it seems that PGK-1 acts as a polymerase alpha cofactor protein (primer recognition protein). Acts as a protein kinase when localized to the mitochondrion where it phosphorylates pyruvate dehydrogenase kinase PDK1 to inhibit pyruvate dehydrogenase complex activity and suppress the formation of acetyl-coenzyme A from pyruvate, and consequently inhibit oxidative phosphorylation and promote glycolysis. May play a role in sperm motility. The polypeptide is Phosphoglycerate kinase 1 (PGK1) (Macaca fascicularis (Crab-eating macaque)).